The sequence spans 1202 residues: Stress response protein NST1 (1202 aa).

7 disordered regions span residues Arg-28–Ala-217, Gly-236–Lys-291, Arg-390–Glu-423, Ala-487–Glu-543, Glu-579–Pro-852, Pro-904–Val-967, and Leu-979–Asn-1015. A compositionally biased stretch (basic and acidic residues) spans Arg-158–Ala-167. Residues Asn-178–Leu-187 show a composition bias toward polar residues. The span at Pro-204–Ala-217 shows a compositional bias: acidic residues. Positions Lys-252–Ala-261 are enriched in basic residues. 2 stretches are compositionally biased toward acidic residues: residues Tyr-408 to Glu-423 and Pro-504 to Thr-536. A coiled-coil region spans residues Glu-557–Arg-704. Basic and acidic residues predominate over residues Glu-579 to Ala-710. Positions Arg-754–Gly-789 are enriched in polar residues. Positions Ser-816–Ser-828 are enriched in pro residues. Low complexity predominate over residues Pro-830–Gly-848. Positions Thr-916–Phe-926 are enriched in polar residues. Positions Lys-954–Val-967 are enriched in basic and acidic residues.

It belongs to the NST1 family.

The protein localises to the cytoplasm. May act as a negative regulator of salt tolerance. The protein is Stress response protein NST1 (NST1) of Phaeosphaeria nodorum (strain SN15 / ATCC MYA-4574 / FGSC 10173) (Glume blotch fungus).